A 321-amino-acid polypeptide reads, in one-letter code: Biotin synthase (321 aa).

A Radical SAM core domain is found at 44–270; the sequence is RGVRIHILNN…DAEVRAAGGR (227 aa). Residues Cys59, Cys63, and Cys66 each contribute to the [4Fe-4S] cluster site. Cys103, Cys135, Cys195, and Arg265 together coordinate [2Fe-2S] cluster.

It belongs to the radical SAM superfamily. Biotin synthase family. In terms of assembly, homodimer. [4Fe-4S] cluster serves as cofactor. It depends on [2Fe-2S] cluster as a cofactor.

The catalysed reaction is (4R,5S)-dethiobiotin + (sulfur carrier)-SH + 2 reduced [2Fe-2S]-[ferredoxin] + 2 S-adenosyl-L-methionine = (sulfur carrier)-H + biotin + 2 5'-deoxyadenosine + 2 L-methionine + 2 oxidized [2Fe-2S]-[ferredoxin]. It functions in the pathway cofactor biosynthesis; biotin biosynthesis; biotin from 7,8-diaminononanoate: step 2/2. Functionally, catalyzes the conversion of dethiobiotin (DTB) to biotin by the insertion of a sulfur atom into dethiobiotin via a radical-based mechanism. The sequence is that of Biotin synthase from Magnetococcus marinus (strain ATCC BAA-1437 / JCM 17883 / MC-1).